The primary structure comprises 155 residues: Large ribosomal subunit protein uL30 (155 aa).

The protein belongs to the universal ribosomal protein uL30 family. Part of the 50S ribosomal subunit.

The sequence is that of Large ribosomal subunit protein uL30 from Nitrosopumilus maritimus (strain SCM1).